Reading from the N-terminus, the 76-residue chain is uncharacterized protein (76 aa).

This is an uncharacterized protein from Enterobacteria phage T4 (Bacteriophage T4).